A 99-amino-acid polypeptide reads, in one-letter code: HTH-type transcriptional regulator YgaV (99 aa).

The HTH arsR-type domain maps to 7 to 99; that stretch reads LQASAEQAAA…IATLKNVYCP (93 aa). The H-T-H motif DNA-binding region spans 41 to 64; it reads AGELTRITGLSASATSQHLARMRD.

In the presence of H(2)S, two cysteine residues form an intramolecular tetrasulfide bond, which attenuates the binding of YgaV to DNA. Both unmodified YgaV and sulfide-modified YgaV can probably function as either a repressor or an activator. Binds heme, which may influence the DNA-binding affinity. Transcriptional regulator that regulates large-scale gene expression in response to sulfide. May act as a global regulator responsible for redox homeostasis. It functions as both a repressor and an activator. In the absence of sulfide compounds, it negatively regulates many anaerobic respiratory genes, including formate, fumarate, lactate, nitrate and nitrite reductase genes. In the presence of hydrogen sulfide (H(2)S), YgaV activity is attenuated, leading to the expression of anaerobic respiratory and ROS scavenging genes, which contributes to redox homeostasis, reactive oxygen species (ROS) scavenging and antibiotic tolerance. It responds to H(2)O(2) scavenging and increases antibiotic tolerance under H(2)S-atmospheric conditions. It also negatively regulates its own expression by binding to the ygaVP promoter region. May also be involved in regulatory mechanisms that operate independently of sulfide. The protein is HTH-type transcriptional regulator YgaV (ygaV) of Escherichia coli (strain K12).